A 556-amino-acid polypeptide reads, in one-letter code: MSVSAFNRRWAAVILEALTRHGVRHVCIAPGSRSTPLTLAAAENPAFIHHTHFDERGLGHLALGLAKVSQQPVAVIVTSGTAVANLYPALIEAGLTGEKLILLTADRPPELIDCGANQAIRQAGMFASHPSQTLSLPRPTQDIPARWLVSTIDNALAMLHAGALHINCPFAEPLYGDMNDTGLVWQQRLGDWWQDEKPWLREARRLASDKQRDWFFWRQKRGVVVAGRMSAEEGKKVAQWAQTLGWPLIGDVLSQTGQPLPCADLWLGNAKAVTELQQAQIVVQLGSSLTGKRLLQWQATCVPEEYWVIDNIEGRLDPAHHRGRRLVAKIADWLELHPAEKRKPWCVEIPRLAELAWQRVVAQRDTFGEAQLAHRIRDYLPEQGQLFVGNSLVVRLIDALSQLPAGYPVYSNRGASGIDGLLSTAAGVQRASAKSTLAIVGDLSALYDLNALALLRQVSAPFVLIVVNNNGGQIFSLLPTPQSKRERFYLMPQNVHFDHAAAMFNLRYHRPENWEELESALAGAWRTPATTVIELVVNDTDGAQTLQQLLAQVSHL.

Belongs to the TPP enzyme family. MenD subfamily. As to quaternary structure, homodimer. Mg(2+) is required as a cofactor. Requires Mn(2+) as cofactor. Thiamine diphosphate serves as cofactor.

It carries out the reaction isochorismate + 2-oxoglutarate + H(+) = 5-enolpyruvoyl-6-hydroxy-2-succinyl-cyclohex-3-ene-1-carboxylate + CO2. Its pathway is quinol/quinone metabolism; 1,4-dihydroxy-2-naphthoate biosynthesis; 1,4-dihydroxy-2-naphthoate from chorismate: step 2/7. It participates in quinol/quinone metabolism; menaquinone biosynthesis. Functionally, catalyzes the thiamine diphosphate-dependent decarboxylation of 2-oxoglutarate and the subsequent addition of the resulting succinic semialdehyde-thiamine pyrophosphate anion to isochorismate to yield 2-succinyl-5-enolpyruvyl-6-hydroxy-3-cyclohexene-1-carboxylate (SEPHCHC). The sequence is that of 2-succinyl-5-enolpyruvyl-6-hydroxy-3-cyclohexene-1-carboxylate synthase from Salmonella typhi.